A 471-amino-acid chain; its full sequence is Glutamate--tRNA ligase (471 aa).

Residues 9–19 (PSPTGYLHVGG) carry the 'HIGH' region motif. Zn(2+) contacts are provided by cysteine 98, cysteine 100, cysteine 125, and histidine 127. Positions 237–241 (KLSKR) match the 'KMSKS' region motif. Lysine 240 contributes to the ATP binding site.

The protein belongs to the class-I aminoacyl-tRNA synthetase family. Glutamate--tRNA ligase type 1 subfamily. As to quaternary structure, monomer. Zn(2+) is required as a cofactor.

Its subcellular location is the cytoplasm. The enzyme catalyses tRNA(Glu) + L-glutamate + ATP = L-glutamyl-tRNA(Glu) + AMP + diphosphate. In terms of biological role, catalyzes the attachment of glutamate to tRNA(Glu) in a two-step reaction: glutamate is first activated by ATP to form Glu-AMP and then transferred to the acceptor end of tRNA(Glu). The sequence is that of Glutamate--tRNA ligase from Salmonella arizonae (strain ATCC BAA-731 / CDC346-86 / RSK2980).